A 317-amino-acid chain; its full sequence is Ribonuclease Z (317 aa).

Positions 61, 63, 65, 66, 139, 210, and 268 each coordinate Zn(2+). The Proton acceptor role is filled by D65.

It belongs to the RNase Z family. Homodimer. Zn(2+) serves as cofactor.

It carries out the reaction Endonucleolytic cleavage of RNA, removing extra 3' nucleotides from tRNA precursor, generating 3' termini of tRNAs. A 3'-hydroxy group is left at the tRNA terminus and a 5'-phosphoryl group is left at the trailer molecule.. With respect to regulation, inhibited by high salt concentrations. In terms of biological role, zinc phosphodiesterase, which displays some tRNA 3'-processing endonuclease activity. Probably involved in tRNA maturation, by removing a 3'-trailer from precursor tRNA. Can also catalyze the 5' end cleavage of the 5S rRNA. This Haloferax volcanii (strain ATCC 29605 / DSM 3757 / JCM 8879 / NBRC 14742 / NCIMB 2012 / VKM B-1768 / DS2) (Halobacterium volcanii) protein is Ribonuclease Z.